A 315-amino-acid chain; its full sequence is Olfactory receptor 5P59 (315 aa).

Residues 1 to 28 (MAFLQDGNHTAVTEFILLGLTDDPVLRV) are Extracellular-facing. A glycan (N-linked (GlcNAc...) asparagine) is linked at N8. The chain crosses the membrane as a helical span at residues 29–49 (VLFTIILCIYLVTVFGNLSTI). The Cytoplasmic segment spans residues 50–57 (LLIRVSSQ). A helical transmembrane segment spans residues 58-78 (LHHPMYFFLSHLASVDIGISS). Residues 79–102 (SVTPSMLVNFLLERSTISYLGCGI) lie on the Extracellular side of the membrane. Residues C100 and C193 are joined by a disulfide bond. Residues 103-123 (QLGSADFIASVECFLLAAMAY) form a helical membrane-spanning segment. At 124-136 (DRFMAVCNPLLYS) the chain is on the cytoplasmic side. A helical transmembrane segment spans residues 137–157 (TKMSTQVCVQLVVGSYIGGFL). Residues 158 to 200 (NASLIVTVYFFSFLFCGPNRIDHFFCDFAPLAELSCSDVSVSV) lie on the Extracellular side of the membrane. The helical transmembrane segment at 201–221 (LIISFSAGSVTMITVFVIVIS) threads the bilayer. Residues 222-241 (YSYILITILKMHSTEGRHKA) lie on the Cytoplasmic side of the membrane. The chain crosses the membrane as a helical span at residues 242 to 262 (FSTCTSHLTAVTLYYGTITFI). Topologically, residues 263–275 (YVMPKSSFSTDQN) are extracellular. A helical transmembrane segment spans residues 276-296 (KVVSVFYMVMIPMLNPLIYSL). Residues 297 to 315 (SNNEIKGALKRQLGMKTLS) are Cytoplasmic-facing.

It belongs to the G-protein coupled receptor 1 family.

It localises to the cell membrane. Potential odorant receptor. The chain is Olfactory receptor 5P59 from Mus musculus (Mouse).